Here is a 428-residue protein sequence, read N- to C-terminus: Chaperone SurA (428 aa).

An N-terminal signal peptide occupies residues 1-20 (MKNWKTLLLGIAMIANTSFA). 2 consecutive PpiC domains span residues 171-272 (STEL…KVND) and 282-382 (VTEV…ELLD).

Its subcellular location is the periplasm. The catalysed reaction is [protein]-peptidylproline (omega=180) = [protein]-peptidylproline (omega=0). Functionally, chaperone involved in the correct folding and assembly of outer membrane proteins. Recognizes specific patterns of aromatic residues and the orientation of their side chains, which are found more frequently in integral outer membrane proteins. May act in both early periplasmic and late outer membrane-associated steps of protein maturation. The chain is Chaperone SurA from Salmonella choleraesuis (strain SC-B67).